Consider the following 302-residue polypeptide: Succinate--CoA ligase [ADP-forming] subunit alpha (302 aa).

Residues 17-20, K43, and 96-98 each bind CoA; these read TGST and ITE. Y159 serves as a coordination point for substrate. Residue H247 is the Tele-phosphohistidine intermediate of the active site.

This sequence belongs to the succinate/malate CoA ligase alpha subunit family. In terms of assembly, heterotetramer of two alpha and two beta subunits.

It catalyses the reaction succinate + ATP + CoA = succinyl-CoA + ADP + phosphate. The enzyme catalyses GTP + succinate + CoA = succinyl-CoA + GDP + phosphate. It participates in carbohydrate metabolism; tricarboxylic acid cycle; succinate from succinyl-CoA (ligase route): step 1/1. Succinyl-CoA synthetase functions in the citric acid cycle (TCA), coupling the hydrolysis of succinyl-CoA to the synthesis of either ATP or GTP and thus represents the only step of substrate-level phosphorylation in the TCA. The alpha subunit of the enzyme binds the substrates coenzyme A and phosphate, while succinate binding and nucleotide specificity is provided by the beta subunit. The chain is Succinate--CoA ligase [ADP-forming] subunit alpha from Staphylococcus aureus (strain MSSA476).